The primary structure comprises 433 residues: Enolase (433 aa).

Gln-167 lines the (2R)-2-phosphoglycerate pocket. Glu-209 acts as the Proton donor in catalysis. Asp-246, Glu-291, and Asp-318 together coordinate Mg(2+). (2R)-2-phosphoglycerate-binding residues include Lys-343, Arg-372, Ser-373, and Lys-394. Catalysis depends on Lys-343, which acts as the Proton acceptor.

Belongs to the enolase family. As to quaternary structure, component of the RNA degradosome, a multiprotein complex involved in RNA processing and mRNA degradation. Mg(2+) serves as cofactor.

The protein localises to the cytoplasm. It is found in the secreted. It localises to the cell surface. The enzyme catalyses (2R)-2-phosphoglycerate = phosphoenolpyruvate + H2O. It participates in carbohydrate degradation; glycolysis; pyruvate from D-glyceraldehyde 3-phosphate: step 4/5. Its function is as follows. Catalyzes the reversible conversion of 2-phosphoglycerate (2-PG) into phosphoenolpyruvate (PEP). It is essential for the degradation of carbohydrates via glycolysis. This Shewanella piezotolerans (strain WP3 / JCM 13877) protein is Enolase.